Reading from the N-terminus, the 308-residue chain is Aspartate carbamoyltransferase catalytic subunit (308 aa).

Carbamoyl phosphate is bound by residues R57 and T58. Position 86 (K86) interacts with L-aspartate. R107, H135, and Q138 together coordinate carbamoyl phosphate. Positions 168 and 229 each coordinate L-aspartate. Residues L268 and P269 each coordinate carbamoyl phosphate.

The protein belongs to the aspartate/ornithine carbamoyltransferase superfamily. ATCase family. Heterooligomer of catalytic and regulatory chains.

It carries out the reaction carbamoyl phosphate + L-aspartate = N-carbamoyl-L-aspartate + phosphate + H(+). The protein operates within pyrimidine metabolism; UMP biosynthesis via de novo pathway; (S)-dihydroorotate from bicarbonate: step 2/3. Its function is as follows. Catalyzes the condensation of carbamoyl phosphate and aspartate to form carbamoyl aspartate and inorganic phosphate, the committed step in the de novo pyrimidine nucleotide biosynthesis pathway. The sequence is that of Aspartate carbamoyltransferase catalytic subunit from Pyrococcus horikoshii (strain ATCC 700860 / DSM 12428 / JCM 9974 / NBRC 100139 / OT-3).